Here is a 266-residue protein sequence, read N- to C-terminus: Hydroxyethylthiazole kinase (266 aa).

M43 lines the substrate pocket. 2 residues coordinate ATP: R119 and T166. A substrate-binding site is contributed by G193.

This sequence belongs to the Thz kinase family. Mg(2+) is required as a cofactor.

The enzyme catalyses 5-(2-hydroxyethyl)-4-methylthiazole + ATP = 4-methyl-5-(2-phosphooxyethyl)-thiazole + ADP + H(+). The protein operates within cofactor biosynthesis; thiamine diphosphate biosynthesis; 4-methyl-5-(2-phosphoethyl)-thiazole from 5-(2-hydroxyethyl)-4-methylthiazole: step 1/1. Catalyzes the phosphorylation of the hydroxyl group of 4-methyl-5-beta-hydroxyethylthiazole (THZ). The chain is Hydroxyethylthiazole kinase from Methanococcus maripaludis (strain C6 / ATCC BAA-1332).